Here is a 148-residue protein sequence, read N- to C-terminus: Deoxyuridine 5'-triphosphate nucleotidohydrolase (148 aa).

Substrate is bound by residues 67 to 69 (RSG), asparagine 80, 84 to 86 (TID), and lysine 94.

It belongs to the dUTPase family. Mg(2+) serves as cofactor.

The catalysed reaction is dUTP + H2O = dUMP + diphosphate + H(+). Its pathway is pyrimidine metabolism; dUMP biosynthesis; dUMP from dCTP (dUTP route): step 2/2. Functionally, this enzyme is involved in nucleotide metabolism: it produces dUMP, the immediate precursor of thymidine nucleotides and it decreases the intracellular concentration of dUTP so that uracil cannot be incorporated into DNA. This chain is Deoxyuridine 5'-triphosphate nucleotidohydrolase, found in Orientia tsutsugamushi (strain Ikeda) (Rickettsia tsutsugamushi).